The primary structure comprises 253 residues: Probable transcriptional regulatory protein slr0989 (253 aa).

Residues 1 to 22 (MGGRKWQSIKRQKARVDAQKGK) are disordered.

This sequence belongs to the TACO1 family.

Its subcellular location is the cytoplasm. The polypeptide is Probable transcriptional regulatory protein slr0989 (Synechocystis sp. (strain ATCC 27184 / PCC 6803 / Kazusa)).